Here is a 280-residue protein sequence, read N- to C-terminus: 23S rRNA (guanine(748)-N(1))-methyltransferase (280 aa).

Positions 11, 14, 27, and 31 each coordinate Zn(2+). S-adenosyl-L-methionine-binding positions include Tyr70, 100–101, and His188; that span reads TG.

It belongs to the methyltransferase superfamily. RlmA family.

It catalyses the reaction guanosine(748) in 23S rRNA + S-adenosyl-L-methionine = N(1)-methylguanosine(748) in 23S rRNA + S-adenosyl-L-homocysteine + H(+). In terms of biological role, specifically methylates the guanosine in position 748 of 23S rRNA. Confers resistance to the macrolide antibiotic tylosine. In Streptomyces fradiae (Streptomyces roseoflavus), this protein is 23S rRNA (guanine(748)-N(1))-methyltransferase (rlmAII).